The sequence spans 202 residues: Dephospho-CoA kinase (202 aa).

Residues 6-202 (KISVTGDPSS…QCFKALKGTI (197 aa)) enclose the DPCK domain. 14 to 19 (SSGKTE) provides a ligand contact to ATP.

It belongs to the CoaE family.

The protein localises to the cytoplasm. It carries out the reaction 3'-dephospho-CoA + ATP = ADP + CoA + H(+). The protein operates within cofactor biosynthesis; coenzyme A biosynthesis; CoA from (R)-pantothenate: step 5/5. In terms of biological role, catalyzes the phosphorylation of the 3'-hydroxyl group of dephosphocoenzyme A to form coenzyme A. This is Dephospho-CoA kinase from Chlamydia muridarum (strain MoPn / Nigg).